We begin with the raw amino-acid sequence, 556 residues long: Sesquiterpene synthase 2 (556 aa).

Residues aspartate 309, aspartate 313, aspartate 453, and glutamate 461 each coordinate Mg(2+). The DDXXD motif signature appears at 309 to 313 (DDIYD).

It belongs to the terpene synthase family. Tpsa subfamily. It depends on Mg(2+) as a cofactor. The cofactor is Mn(2+). In terms of tissue distribution, mostly expressed in roots and mature leaflets and, to a lower extent, in rachis and developing leaflets.

It catalyses the reaction (2E,6E)-farnesyl diphosphate = alpha-humulene + diphosphate. The enzyme catalyses (2E,6E)-farnesyl diphosphate = alpha-selinene + diphosphate. It carries out the reaction (2E,6E)-farnesyl diphosphate = delta-cadinene + diphosphate. The catalysed reaction is (2E,6E)-farnesyl diphosphate = (1S,2S,4R)-beta-elemene + diphosphate. It participates in secondary metabolite biosynthesis; terpenoid biosynthesis. Functionally, sesquiterpene synthase involved in the biosynthesis of volatile compounds known for their medicinal efficacy for treating enteritis, dysentery, itch and some cancers. Mediates the conversion of (2E,6E)-farnesyl diphosphate (FPP) into beta-elemene, alpha-humulene, delta-cadinene and alpha-selinene. The protein is Sesquiterpene synthase 2 of Toona sinensis (Chinese mahogany).